Reading from the N-terminus, the 455-residue chain is Notoamide E oxidase notB' (455 aa).

The chain crosses the membrane as a helical span at residues 11-31 (PAILSPADLTVIIVGLGIAGL). FAD is bound by residues E48 and G61. A glycan (N-linked (GlcNAc...) asparagine) is linked at N75. R121 is a binding site for FAD. Residues R199 and Y229 contribute to the active site. Positions 324 and 337 each coordinate FAD.

Belongs to the paxM FAD-dependent monooxygenase family. The cofactor is FAD.

It localises to the membrane. It catalyses the reaction notoamide E + NADPH + O2 + H(+) = notoamide C + NADP(+) + H2O. The catalysed reaction is notoamide E + NADPH + O2 + H(+) = notoamide D + NADP(+) + H2O. The protein operates within alkaloid biosynthesis. In terms of biological role, FAD-dependent monooxygenase; part of the gene cluster that mediates the biosynthesis of notoamide, a fungal indole alkaloid that belongs to a family of natural products containing a characteristic bicyclo[2.2.2]diazaoctane core. The first step of notoamide biosynthesis involves coupling of L-proline and L-tryptophan by the bimodular NRPS notE', to produce cyclo-L-tryptophan-L-proline called brevianamide F. The reverse prenyltransferase notF' then acts as a deoxybrevianamide E synthase and converts brevianamide F to deoxybrevianamide E via reverse prenylation at C-2 of the indole ring leading to the bicyclo[2.2.2]diazaoctane core. Deoxybrevianamide E is further hydroxylated at C-6 of the indole ring, likely catalyzed by the cytochrome P450 monooxygenase notG', to yield 6-hydroxy-deoxybrevianamide E. 6-hydroxy-deoxybrevianamide E is a specific substrate of the prenyltransferase notC' for normal prenylation at C-7 to produce 6-hydroxy-7-prenyl-deoxybrevianamide, also called notoamide S. As the proposed pivotal branching point in notoamide biosynthesis, notoamide S can be diverted to notoamide E through an oxidative pyran ring closure putatively catalyzed by either notH' cytochrome P450 monooxygenase or the notD' FAD-linked oxidoreductase. This step would be followed by an indole 2,3-epoxidation-initiated pinacol-like rearrangement catalyzed by the notB' FAD-dependent monooxygenase leading to the formation of notoamide C and notoamide D. On the other hand notoamide S is converted to notoamide T by notH' (or notD'), a bifunctional oxidase that also functions as the intramolecular Diels-Alderase responsible for generation of (-)-notoamide T. To generate antipodal (+)-notoaminide T, notH (or notD) in Aspergillus strain MF297-2 is expected to catalyze a Diels-Alder reaction leading to the opposite stereochemistry. The remaining oxidoreductase notD' (or notH') likely catalyzes the oxidative pyran ring formation to yield (-)-stephacidin A. The FAD-dependent monooxygenase notI' is highly similar to notB' and is predicted to catalyze a similar conversion from (-)-stephacidin A to (+)-notoamide B via the 2,3-epoxidation of (-)-stephacidin A followed by a pinacol-type rearrangement. Finally, it remains unclear which enzyme could be responsible for the final hydroxylation steps leading to notoamide A and sclerotiamide. In Aspergillus versicolor, this protein is Notoamide E oxidase notB'.